A 366-amino-acid polypeptide reads, in one-letter code: NADH-quinone oxidoreductase subunit D (366 aa).

It belongs to the complex I 49 kDa subunit family. In terms of assembly, NDH-1 is composed of 14 different subunits. Subunits NuoB, C, D, E, F, and G constitute the peripheral sector of the complex.

It localises to the cell membrane. The enzyme catalyses a quinone + NADH + 5 H(+)(in) = a quinol + NAD(+) + 4 H(+)(out). NDH-1 shuttles electrons from NADH, via FMN and iron-sulfur (Fe-S) centers, to quinones in the respiratory chain. The immediate electron acceptor for the enzyme in this species is believed to be a menaquinone. Couples the redox reaction to proton translocation (for every two electrons transferred, four hydrogen ions are translocated across the cytoplasmic membrane), and thus conserves the redox energy in a proton gradient. In Bacillus cereus (strain ATCC 14579 / DSM 31 / CCUG 7414 / JCM 2152 / NBRC 15305 / NCIMB 9373 / NCTC 2599 / NRRL B-3711), this protein is NADH-quinone oxidoreductase subunit D.